The primary structure comprises 314 residues: Lysophospholipase D GDPD1 (314 aa).

At 1–3 (MSS) the chain is on the extracellular side. The helical transmembrane segment at 4-24 (TAAFYLLSTLGGYLVTSFLLL) threads the bilayer. Residues 25–195 (KYPTLLHQRK…VEKCYKENSD (171 aa)) are Cytoplasmic-facing. The region spanning 40 to 309 (SKHISHRGGA…DYPTKLRDFL (270 aa)) is the GP-PDE domain. A divalent metal cation is bound by residues E72, D74, and H87. Residues 196–216 (IPILFSLQRVLLILGLFFTGL) traverse the membrane as a helical segment. At 217 to 314 (LPFVPIREQF…LRDFLHNFSA (98 aa)) the chain is on the extracellular side.

The protein belongs to the glycerophosphoryl diester phosphodiesterase family. In terms of tissue distribution, widely expressed with high expression level in testis.

It is found in the cytoplasm. The protein localises to the membrane. Its subcellular location is the perinuclear region. It localises to the endoplasmic reticulum. It catalyses the reaction a 1-O-alkyl-sn-glycero-3-phosphocholine + H2O = a 1-O-alkyl-sn-glycero-3-phosphate + choline + H(+). It carries out the reaction 1-hexadecanoyl-sn-glycero-3-phosphocholine + H2O = 1-hexadecanoyl-sn-glycero-3-phosphate + choline + H(+). The catalysed reaction is N-hexadecanoyl-sn-glycero-3-phosphoethanolamine + H2O = N-hexadecanoylethanolamine + sn-glycerol 3-phosphate + H(+). The enzyme catalyses N-(5Z,8Z,11Z,14Z-eicosatetraenoyl)-1-(9Z-octadecenoyl)-sn-glycero-3-phosphoethanolamine + H2O = N-(5Z,8Z,11Z,14Z-eicosatetraenoyl)-ethanolamine + 1-(9Z-octadecenoyl)-sn-glycero-3-phosphate + H(+). It catalyses the reaction N,1-di-(9Z-octadecenoyl)-sn-glycero-3-phosphoethanolamine + H2O = N-(9Z-octadecenoyl) ethanolamine + 1-(9Z-octadecenoyl)-sn-glycero-3-phosphate + H(+). It carries out the reaction N-hexadecanoyl-1-(9Z-octadecenoyl)-sn-glycero-3-phosphoethanolamine + H2O = N-hexadecanoylethanolamine + 1-(9Z-octadecenoyl)-sn-glycero-3-phosphate + H(+). The catalysed reaction is 1-O-(1Z-octadecenyl)-sn-glycero-3-phospho-N-hexadecanoyl-ethanolamine + H2O = 1-O-(1Z-octadecenyl)-sn-glycero-3-phosphate + N-hexadecanoylethanolamine + H(+). The enzyme catalyses 1-hexadecanoyl-sn-glycero-3-phosphoethanolamine + H2O = 1-hexadecanoyl-sn-glycero-3-phosphate + ethanolamine + H(+). It catalyses the reaction 1-O-hexadecyl-sn-glycero-3-phosphocholine + H2O = 1-O-hexadecyl-sn-glycero-3-phosphate + choline + H(+). It carries out the reaction 1-(9Z-octadecenoyl)-sn-glycero-3-phosphocholine + H2O = 1-(9Z-octadecenoyl)-sn-glycero-3-phosphate + choline + H(+). The catalysed reaction is N,1-dihexadecanoyl-sn-glycero-3-phosphoethanolamine + H2O = N-hexadecanoylethanolamine + 1-hexadecanoyl-sn-glycero-3-phosphate + H(+). The enzyme catalyses 1-O-(1Z-octadecenyl)-sn-glycero-3-phospho-(N-5Z,8Z,11Z,14Z-eicosatetraenoyl)-ethanolamine + H2O = 1-O-(1Z-octadecenyl)-sn-glycero-3-phosphate + N-(5Z,8Z,11Z,14Z-eicosatetraenoyl)-ethanolamine + H(+). It catalyses the reaction 1-O-(1Z-octadecenyl)-sn-glycero-3-phospho-(N-9Z-octadecenoyl)-ethanolamine + H2O = 1-O-(1Z-octadecenyl)-sn-glycero-3-phosphate + N-(9Z-octadecenoyl) ethanolamine + H(+). Lysophospholipase D activity is increased by magnesium and manganese and inhibited by calcium in a concentration dependent manner. Loss of lysophospholipase D activity by addition of EDTA. In terms of biological role, hydrolyzes lysoglycerophospholipids to produce lysophosphatidic acid (LPA) and the corresponding amines. Shows a preference for 1-O-alkyl-sn-glycero-3-phosphocholine (lyso-PAF), lysophosphatidylethanolamine (lyso-PE) and lysophosphatidylcholine (lyso-PC). May be involved in bioactive N-acylethanolamine biosynthesis from both N-acyl-lysoplasmenylethanolamin (N-acyl-lysoPlsEt) and N-acyl-lysophosphatidylethanolamin (N-acyl-lysoPE). In addition, hydrolyzes glycerophospho-N-acylethanolamine to N-acylethanolamine. Does not display glycerophosphodiester phosphodiesterase activity, since it cannot hydrolyze either glycerophosphoinositol or glycerophosphocholine. This is Lysophospholipase D GDPD1 from Homo sapiens (Human).